The sequence spans 445 residues: MSKKLYIKTYGCQMNVYDSIKMQDLLYPFGYEPTENIEEADVIILNTCHIREKAAEKTYSELGRIKKLQDTRTKQGLSSAIIVVAGCVAQAEGEEIFTRTPYVDIVVGPQSYYNLPELISKVVRHEKHLIDLDFVEEAKFDQLPEQLYPQGTSAFISVQEGCDKFCTFCVVPYTRGAEFSRNVEQVYREALKVVSSGAKEIMLLGQNVNAYHGKGPADKIFSLADLLKHLAQIPNLERLRYTTSHPIDMNNDLIKLYGTEPKLMPFLHLPVQSGSNKILKAMNRKHDREYYFDIINRLREARPDIVLSSDFIVGFPGETDEDFEDTLDLVRRVKYGQCYSFKYSPRPGTPGATRTDQIPEHIKSERLTILQQELMAQQLAFNTSCVGSTMKVLFDRNGKFDDQIIGKTPYMQSVYIQNPNKSLLGKIIDVKITKASLNSLTGEIL.

Residues 3-124 (KKLYIKTYGC…LPELISKVVR (122 aa)) enclose the MTTase N-terminal domain. [4Fe-4S] cluster is bound by residues Cys-12, Cys-48, Cys-87, Cys-162, Cys-166, and Cys-169. The Radical SAM core domain occupies 148–380 (YPQGTSAFIS…QQELMAQQLA (233 aa)). Residues 383–445 (TSCVGSTMKV…SLNSLTGEIL (63 aa)) enclose the TRAM domain.

Belongs to the methylthiotransferase family. MiaB subfamily. Monomer. [4Fe-4S] cluster serves as cofactor.

It localises to the cytoplasm. It catalyses the reaction N(6)-dimethylallyladenosine(37) in tRNA + (sulfur carrier)-SH + AH2 + 2 S-adenosyl-L-methionine = 2-methylsulfanyl-N(6)-dimethylallyladenosine(37) in tRNA + (sulfur carrier)-H + 5'-deoxyadenosine + L-methionine + A + S-adenosyl-L-homocysteine + 2 H(+). In terms of biological role, catalyzes the methylthiolation of N6-(dimethylallyl)adenosine (i(6)A), leading to the formation of 2-methylthio-N6-(dimethylallyl)adenosine (ms(2)i(6)A) at position 37 in tRNAs that read codons beginning with uridine. This Rickettsia rickettsii (strain Iowa) protein is tRNA-2-methylthio-N(6)-dimethylallyladenosine synthase.